The primary structure comprises 256 residues: Leucine-rich repeat-containing protein 18 (256 aa).

LRR repeat units lie at residues 28-49, 51-72, 74-95, 97-118, 122-144, 145-167, 168-189, and 194-215; these read GRKR…ILRL, EIDE…ISKF, NLRW…IGQM, SLLF…VELN, NIRT…GALK, ELHE…SKLP, KLKK…DMFV, and RLEN…QKCQ.

Its subcellular location is the cytoplasm. Its function is as follows. May be involved in the regulation of spermatogenesis and sperm maturation. This Rattus norvegicus (Rat) protein is Leucine-rich repeat-containing protein 18 (Lrrc18).